The sequence spans 549 residues: MARDATKLEATVAKLKKHWAESAPRDMRAAFSADPGRFGRYSLCLDDLLFDWSKCRVNDETMALLKELAVAADVEGRRAAMFAGEHINNTEDRVVLHVALRDTSSKEVLVDGHNVLPDVKHVLDRMAAFADGIRSGALKGATGRKITDIVNIGIGGSDLGPVMATLALAPYHDGPRAHFVSNIDGAHIADTLSPLDPASTLIIVASKTFTTIETMTNAQTARKWVADTLGEAAVGAHFAAVSTALDKVAAFGIPEDRVFGFWDWVGGRYSVWSAIGLPVMIAVGPDNFRKFLAGAHAMDVHFRDAPLEKNLPVMLGLIGYWHRAICGYGSRAIIPYDQRLSRLPAYLQQLDMESNGKSVTLDGKPVSGPTGPVVWGEPGTNGQHAFFQLLHQGTDTIPLEFIVAAKGHEPTLDHQHEMLMANCLAQSEALMKGRTLDEARAQLQAKNLPASQVERIAPHRVFSGNRPSLTLIHDMLDPYALGRLIALYEHRVFVEAQIFGINAFDQWGVELGKELATELLPVVSGKEGASGRDASTQGLVAHLHARRKA.

The Proton donor role is filled by E353. Residues H384 and K513 contribute to the active site.

Belongs to the GPI family.

Its subcellular location is the cytoplasm. It carries out the reaction alpha-D-glucose 6-phosphate = beta-D-fructose 6-phosphate. It participates in carbohydrate biosynthesis; gluconeogenesis. The protein operates within carbohydrate degradation; glycolysis; D-glyceraldehyde 3-phosphate and glycerone phosphate from D-glucose: step 2/4. In terms of biological role, catalyzes the reversible isomerization of glucose-6-phosphate to fructose-6-phosphate. The sequence is that of Glucose-6-phosphate isomerase from Brucella suis (strain ATCC 23445 / NCTC 10510).